Consider the following 917-residue polypeptide: Protein translocase subunit SecA (917 aa).

ATP contacts are provided by residues Q87, 105-109, and D501; that span reads GEGKT. The Zn(2+) site is built by C901, C903, C912, and H913.

This sequence belongs to the SecA family. As to quaternary structure, monomer and homodimer. Part of the essential Sec protein translocation apparatus which comprises SecA, SecYEG and auxiliary proteins SecDF-YajC and YidC. The cofactor is Zn(2+).

Its subcellular location is the cell inner membrane. It localises to the cytoplasm. The enzyme catalyses ATP + H2O + cellular proteinSide 1 = ADP + phosphate + cellular proteinSide 2.. Part of the Sec protein translocase complex. Interacts with the SecYEG preprotein conducting channel. Has a central role in coupling the hydrolysis of ATP to the transfer of proteins into and across the cell membrane, serving both as a receptor for the preprotein-SecB complex and as an ATP-driven molecular motor driving the stepwise translocation of polypeptide chains across the membrane. The protein is Protein translocase subunit SecA of Granulibacter bethesdensis (strain ATCC BAA-1260 / CGDNIH1).